The chain runs to 101 residues: Small ribosomal subunit protein uS14 (101 aa).

It belongs to the universal ribosomal protein uS14 family. In terms of assembly, part of the 30S ribosomal subunit. Contacts proteins S3 and S10.

Its function is as follows. Binds 16S rRNA, required for the assembly of 30S particles and may also be responsible for determining the conformation of the 16S rRNA at the A site. This is Small ribosomal subunit protein uS14 from Salmonella paratyphi A (strain ATCC 9150 / SARB42).